A 333-amino-acid polypeptide reads, in one-letter code: Sphingomyelinase C (333 aa).

Residues 1–26 form the signal peptide; that stretch reads MKGKLLKGVLSLGVGLGALYSGTSAQ. Residues C150 and C186 are joined by a disulfide bond.

It belongs to the neutral sphingomyelinase family. Mg(2+) serves as cofactor. In terms of processing, the N-terminus is blocked.

It localises to the secreted. The enzyme catalyses a sphingomyelin + H2O = phosphocholine + an N-acylsphing-4-enine + H(+). With respect to regulation, activated by cobalt and manganese ions. Functionally, required, with sphingomyelinase, to effect target cell lysis (hemolysis). The protein is Sphingomyelinase C (cerB) of Bacillus cereus.